Here is a 448-residue protein sequence, read N- to C-terminus: Ribonuclease J (448 aa).

His81, His83, Asp85, His86, His151, and Asp173 together coordinate Zn(2+). 383-387 (HVSGH) lines the substrate pocket. His409 contacts Zn(2+).

Belongs to the metallo-beta-lactamase superfamily. RNA-metabolizing metallo-beta-lactamase-like family. Archaeal RNase J subfamily. In terms of assembly, forms homodimers on heating to 60 degrees Celsius which may be the active form. The cofactor is Zn(2+).

It localises to the cytoplasm. With respect to regulation, inhibited by imidazole. A 5'-3' exoribonuclease with a strong reference for 5'-monophosphorylated RNA and no endoribonuclease activty. Also has robust 5'-'3 nuclease activity on single-stranded DNA (exodeoxyribonuclease, exoDNase). May be involved in RNA degradation. The polypeptide is Ribonuclease J (Methanocaldococcus jannaschii (strain ATCC 43067 / DSM 2661 / JAL-1 / JCM 10045 / NBRC 100440) (Methanococcus jannaschii)).